The chain runs to 914 residues: MAGKARVHELAKELGVTSKEVLARLNEQGEFVKSASSTVEAPVARRLRESFGGGKAAEGAAKAPAKAAAKGDAKTAAKGDVKAPDKALDAALDNAIKAGGNGEAAAPPAQPGGTATTPAAQATPEAPARPGPAAARPSAPAPGQPKPPAPGQPPRPGATPGPRPGPAPKPAARTPRVGNNPFSSAQPVDRPIPRPVPRPGAPRPGAPRPGASPGNMPPRPGGVGGPGRPARPGAPRPGGGRPGGPGGRDGGGGNYRGGGVGAPPGGGGGFRGRPGGGGGGRPGQRGGAAGAFGRPGGAPRRGRKSKRQKRQEYDSMQAPVVGGVRLPHGNGETIRLARGASLSDFAEKIDANPASLVQALFNLGEMVTATQSVGDETLELLGSEMNYNVQVVSPEDEDRELLESFDLTYGEDEGTEEDLQTRPPVVTVMGHVDHGKTRLLDTIRKANVREAEQVTVEHDGVERPITFIDTPGHEAFTAMRARGAKATDIAILVVAADDGVMPQTVEAINHAQAADVPIVVAVNKIDVEGADPQKIRGQLTEYGLVPEEFGGDTMFVDISAKQGTNIDQLLEAVLLTADAALDLRANPDMEAQGVAIEAHLDRGRGPVATVLIQRGTLRVGDSIVAGDAYGRVRRMVDEHGDDVEEALPSRPVQVIGFTSVPGAGDNLLVVDEDRIARQIADKRSARKRNALAARSRKRISLEDLDSALKETSQLNLILKGDNAGTVEALEEALMGIQIDDEVALRVIDRGVGGITETNVNLASASDAVIIGFNVRAEGKATELANREGVEIRYYSVIYQAIDEIEKALRGMLKPIYEENQLGRAEIRAIFRSSKVGIIAGCMITSGVVRRNAKARLLRDNVVVSENLTINSLRREKDDVTEVREGFECGMTLGYSDIKEGDVIESYELVQKERT.

Disordered stretches follow at residues 52–84 and 98–326; these read GGGK…VKAP and AGGN…GVRL. Over residues 57–68 the composition is skewed to low complexity; sequence AEGAAKAPAKAA. The span at 69 to 84 shows a compositional bias: basic and acidic residues; sequence AKGDAKTAAKGDVKAP. Over residues 98 to 138 the composition is skewed to low complexity; it reads AGGNGEAAAPPAQPGGTATTPAAQATPEAPARPGPAAARPS. Composition is skewed to pro residues over residues 139–169 and 193–207; these read APAP…PAPK and PRPV…PGAP. The segment covering 236–296 has biased composition (gly residues); that stretch reads RPGGGRPGGP…GAAGAFGRPG (61 aa). The segment covering 300-309 has biased composition (basic residues); sequence RRGRKSKRQK. In terms of domain architecture, tr-type G spans 421–581; it reads TRPPVVTVMG…AVLLTADAAL (161 aa). Residues 430–437, 469–473, and 523–526 each bind GTP; these read GHVDHGKT, DTPGH, and NKID.

This sequence belongs to the TRAFAC class translation factor GTPase superfamily. Classic translation factor GTPase family. IF-2 subfamily.

It is found in the cytoplasm. In terms of biological role, one of the essential components for the initiation of protein synthesis. Protects formylmethionyl-tRNA from spontaneous hydrolysis and promotes its binding to the 30S ribosomal subunits. Also involved in the hydrolysis of GTP during the formation of the 70S ribosomal complex. This chain is Translation initiation factor IF-2, found in Mycobacterium avium (strain 104).